The chain runs to 59 residues: Large ribosomal subunit protein bL32c (59 aa).

The disordered stretch occupies residues 1 to 20 (MAVPKKRTSKSKKRIRKSVW).

It belongs to the bacterial ribosomal protein bL32 family.

The protein localises to the plastid. The protein resides in the chloroplast. The chain is Large ribosomal subunit protein bL32c from Angiopteris evecta (Mule's foot fern).